The following is a 357-amino-acid chain: UDP-N-acetylglucosamine--N-acetylmuramyl-(pentapeptide) pyrophosphoryl-undecaprenol N-acetylglucosamine transferase (357 aa).

Residues 15-17, N125, S190, and Q290 contribute to the UDP-N-acetyl-alpha-D-glucosamine site; that span reads SGG.

The protein belongs to the glycosyltransferase 28 family. MurG subfamily.

The protein resides in the cell inner membrane. The enzyme catalyses di-trans,octa-cis-undecaprenyl diphospho-N-acetyl-alpha-D-muramoyl-L-alanyl-D-glutamyl-meso-2,6-diaminopimeloyl-D-alanyl-D-alanine + UDP-N-acetyl-alpha-D-glucosamine = di-trans,octa-cis-undecaprenyl diphospho-[N-acetyl-alpha-D-glucosaminyl-(1-&gt;4)]-N-acetyl-alpha-D-muramoyl-L-alanyl-D-glutamyl-meso-2,6-diaminopimeloyl-D-alanyl-D-alanine + UDP + H(+). The protein operates within cell wall biogenesis; peptidoglycan biosynthesis. Cell wall formation. Catalyzes the transfer of a GlcNAc subunit on undecaprenyl-pyrophosphoryl-MurNAc-pentapeptide (lipid intermediate I) to form undecaprenyl-pyrophosphoryl-MurNAc-(pentapeptide)GlcNAc (lipid intermediate II). In Chlamydia pneumoniae (Chlamydophila pneumoniae), this protein is UDP-N-acetylglucosamine--N-acetylmuramyl-(pentapeptide) pyrophosphoryl-undecaprenol N-acetylglucosamine transferase.